The following is a 309-amino-acid chain: DnaJ protein ERDJ7 (309 aa).

The first 36 residues, 1-36 (MSQVGSAGEGSNSMAAAPPPRLLLLVVLLLVPVSNA), serve as a signal peptide directing secretion. The Lumenal segment spans residues 37–130 (IYCEEDDCYD…YRAYYGHKTD (94 aa)). The J domain occupies 43–107 (DCYDLLGVKQ…STRGQYDYAI (65 aa)). Asparagine 55 carries N-linked (GlcNAc...) asparagine glycosylation. Residues 131–151 (PRAVLIGLLLIISAFQYLNQF) traverse the membrane as a helical segment. Topologically, residues 152–219 (GRYSKAIETV…GVEKPSLWRL (68 aa)) are cytoplasmic. A helical transmembrane segment spans residues 220-242 (YGVQFILLPYSIGKVLSWKFCWF). The Lumenal portion of the chain corresponds to 243 to 309 (WRYRIKKLPY…EMRKESKRRR (67 aa)).

It is found in the endoplasmic reticulum membrane. Its function is as follows. May play a role in protein folding in the endoplasmic reticulum. The polypeptide is DnaJ protein ERDJ7 (Oryza sativa subsp. japonica (Rice)).